The primary structure comprises 382 residues: Mannitol-1-phosphate 5-dehydrogenase (382 aa).

3 to 14 is a binding site for NAD(+); that stretch reads ALHFGAGNIGRG.

Belongs to the mannitol dehydrogenase family.

It carries out the reaction D-mannitol 1-phosphate + NAD(+) = beta-D-fructose 6-phosphate + NADH + H(+). In Salmonella dublin (strain CT_02021853), this protein is Mannitol-1-phosphate 5-dehydrogenase.